The following is a 366-amino-acid chain: Short-chain collagen C4 (366 aa).

A compositionally biased stretch (low complexity) spans 1–14 (DTGPQGPQGVAGPP). 2 triple-helical region regions span residues 1 to 23 (DTGP…KGDK) and 40 to 210 (GPPG…NGAV). The tract at residues 1-207 (DTGPQGPQGV…QGPQGAPGSN (207 aa)) is disordered. Pro residues predominate over residues 28–45 (YPPPPTCPTCPAGPPGAP). 2 stretches are compositionally biased toward low complexity: residues 75–90 (PGND…PGYD) and 99–110 (TGAPGPQGPKGD). Residues 138–149 (DGQDGAKGDKGD) are compositionally biased toward basic and acidic residues. Low complexity-rich tracts occupy residues 150–168 (QGPA…QGPA) and 189–201 (QGPK…QGPQ).

The protein resides in the secreted. It localises to the extracellular space. Its subcellular location is the extracellular matrix. The sequence is that of Short-chain collagen C4 from Ephydatia muelleri (Mueller's freshwater sponge).